A 548-amino-acid polypeptide reads, in one-letter code: Viridiflorene synthase (548 aa).

Residues aspartate 301, aspartate 305, aspartate 444, threonine 448, and glutamate 452 each contribute to the Mg(2+) site. A DDXXD motif motif is present at residues aspartate 301–aspartate 305.

The protein belongs to the terpene synthase family. Tpsa subfamily. Mg(2+) is required as a cofactor. Expressed in stem and leaf trichomes. Detected in roots, fruits and flowers.

Its subcellular location is the cytoplasm. The catalysed reaction is (2E,6E)-farnesyl diphosphate = viridiflorene + diphosphate. It functions in the pathway secondary metabolite biosynthesis; terpenoid biosynthesis. Sesquiterpene synthase involved in the production of viridiflorene from (E,E)-farnesyl diphosphate. Can also use (Z,Z)-FPP to make several unidentified sesquiterpenes. The chain is Viridiflorene synthase from Solanum lycopersicum (Tomato).